The following is a 243-amino-acid chain: High affinity immunoglobulin epsilon receptor subunit beta (243 aa).

Residues 1-48 form a disordered region; sequence MDTENKSRADLALPNPQESPSAPDIELLEASPPAKALPEKPASPPPQQ. Over 1–59 the chain is Cytoplasmic; the sequence is MDTENKSRADLALPNPQESPSAPDIELLEASPPAKALPEKPASPPPQQTWQSFLKKELE. Residues 60 to 79 traverse the membrane as a helical segment; that stretch reads FLGVTQVLVGLICLCFGTVV. Residues 80-97 are Extracellular-facing; the sequence is CSTLQTSDFDDEVLLLYR. The chain crosses the membrane as a helical span at residues 98–117; sequence AGYPFWGAVLFVLSGFLSIM. The Cytoplasmic portion of the chain corresponds to 118-130; it reads SERKNTLYLVRGS. A helical transmembrane segment spans residues 131-150; the sequence is LGANIVSSIAAGLGIAILIL. Residues 151 to 179 lie on the Extracellular side of the membrane; that stretch reads NLSNNSAYMNYCKDITEDDGCFVTSFITE. The chain crosses the membrane as a helical span at residues 180 to 199; that stretch reads LVLMLLFLTILAFCSAVLLI. The Cytoplasmic segment spans residues 200-243; sequence IYRIGQEFERSKVPDDRLYEELHVYSPIYSALEDTREASAPVVS. Phosphotyrosine is present on residues Tyr218 and Tyr224. Residue Ser225 is modified to Phosphoserine. Residue Tyr228 is modified to Phosphotyrosine.

The protein belongs to the MS4A family. In terms of assembly, tetramer of an alpha chain, a beta chain, and two disulfide linked gamma chains. Binds LILRB1. Interacts with FES/FPS and LYN. Interacts with FGR. Phosphorylated on tyrosine residues by LYN.

It localises to the membrane. Functionally, high affinity receptor that binds to the Fc region of immunoglobulins epsilon. Aggregation of FCER1 by multivalent antigens is required for the full mast cell response, including the release of preformed mediators (such as histamine) by degranulation and de novo production of lipid mediators and cytokines. Also mediates the secretion of important lymphokines. Binding of allergen to receptor-bound IgE leads to cell activation and the release of mediators responsible for the manifestations of allergy. This chain is High affinity immunoglobulin epsilon receptor subunit beta (Ms4a2), found in Rattus norvegicus (Rat).